Reading from the N-terminus, the 415-residue chain is Serine hydroxymethyltransferase (415 aa).

Residues Leu122 and 126–128 (GHL) each bind (6S)-5,6,7,8-tetrahydrofolate. Position 230 is an N6-(pyridoxal phosphate)lysine (Lys230).

It belongs to the SHMT family. As to quaternary structure, homodimer. The cofactor is pyridoxal 5'-phosphate.

Its subcellular location is the cytoplasm. The catalysed reaction is (6R)-5,10-methylene-5,6,7,8-tetrahydrofolate + glycine + H2O = (6S)-5,6,7,8-tetrahydrofolate + L-serine. Its pathway is one-carbon metabolism; tetrahydrofolate interconversion. The protein operates within amino-acid biosynthesis; glycine biosynthesis; glycine from L-serine: step 1/1. Functionally, catalyzes the reversible interconversion of serine and glycine with tetrahydrofolate (THF) serving as the one-carbon carrier. This reaction serves as the major source of one-carbon groups required for the biosynthesis of purines, thymidylate, methionine, and other important biomolecules. Also exhibits THF-independent aldolase activity toward beta-hydroxyamino acids, producing glycine and aldehydes, via a retro-aldol mechanism. The sequence is that of Serine hydroxymethyltransferase from Ralstonia pickettii (strain 12J).